Consider the following 258-residue polypeptide: Granzyme M (258 aa).

The Peptidase S1 domain maps to 21-250 (IIGGREAVPH…YSSWIRKVIG (230 aa)). Cysteines 46 and 62 form a disulfide. Residues His61 and Asp107 each act as charge relay system in the active site. The tract at residues 122 to 141 (NVKPLALPRKPRDKPAEGSR) is disordered. 3 cysteine pairs are disulfide-bonded: Cys142-Cys210, Cys173-Cys189, and Cys200-Cys226. A glycan (N-linked (GlcNAc...) asparagine) is linked at Asn174. Catalysis depends on Ser204, which acts as the Charge relay system. An N-linked (GlcNAc...) asparagine glycan is attached at Asn225.

It belongs to the peptidase S1 family. Granzyme subfamily.

It is found in the secreted. The protein localises to the cytoplasmic granule. Functionally, cleaves peptide substrates after methionine, leucine, and norleucine. Physiological substrates include EZR, alpha-tubulins and the apoptosis inhibitor BIRC5/Survivin. Promotes caspase activation and subsequent apoptosis of target cells. This chain is Granzyme M (Gzmm), found in Rattus norvegicus (Rat).